A 275-amino-acid chain; its full sequence is Collectin-10 (275 aa).

A signal peptide spans 1-25; the sequence is MKYGKLWPIGVSVLGVIALHVRVLS. N-linked (GlcNAc...) asparagine glycosylation occurs at Asn30. The segment at 39-76 is disordered; sequence THTILPGPKGDDGEAGDTGVLGKLGKDGPKGQKGNKGI. Residues 51-110 enclose the Collagen-like domain; that stretch reads GEAGDTGVLGKLGKDGPKGQKGNKGIIGDSGDLGLIGKIGPIGSKGDKGHKGLPGLPGGK. In terms of domain architecture, C-type lectin spans 153 to 269; it reads TDEKYYYIVR…CSLTIYFVCE (117 aa). 2 cysteine pairs are disulfide-bonded: Cys174/Cys268 and Cys246/Cys260.

It belongs to the COLEC10/COLEC11 family.

Its subcellular location is the secreted. Functionally, lectin that binds to various sugars: galactose &gt; mannose = fucose &gt; N-acetylglucosamine &gt; N-acetylgalactosamine. This is Collectin-10 (colec10) from Xenopus tropicalis (Western clawed frog).